Consider the following 99-residue polypeptide: Transposase InsE for insertion sequence IS3A (99 aa).

Residues 1-21 (MTKTVSTSKKPRKQHSPEFRS) form a disordered region.

Belongs to the transposase 8 family.

Involved in the transposition of the insertion sequence IS3. The polypeptide is Transposase InsE for insertion sequence IS3A (insE1) (Escherichia coli (strain K12)).